A 237-amino-acid polypeptide reads, in one-letter code: Phosphoribosylaminoimidazole-succinocarboxamide synthase (237 aa).

Belongs to the SAICAR synthetase family.

It carries out the reaction 5-amino-1-(5-phospho-D-ribosyl)imidazole-4-carboxylate + L-aspartate + ATP = (2S)-2-[5-amino-1-(5-phospho-beta-D-ribosyl)imidazole-4-carboxamido]succinate + ADP + phosphate + 2 H(+). The protein operates within purine metabolism; IMP biosynthesis via de novo pathway; 5-amino-1-(5-phospho-D-ribosyl)imidazole-4-carboxamide from 5-amino-1-(5-phospho-D-ribosyl)imidazole-4-carboxylate: step 1/2. The chain is Phosphoribosylaminoimidazole-succinocarboxamide synthase from Halalkalibacterium halodurans (strain ATCC BAA-125 / DSM 18197 / FERM 7344 / JCM 9153 / C-125) (Bacillus halodurans).